The chain runs to 103 residues: MAGIQQKRKTIKSFKTRRKVVPVLIPKKGQAVISNTGEPASRYIIDYKNTQLLVKFISPQGKILSRRATGLTAKQQRIMANAIKRARMGGLVPFVNYELGSKK.

Belongs to the bacterial ribosomal protein bS18 family. As to quaternary structure, part of the 30S ribosomal subunit.

The protein resides in the plastid. Its subcellular location is the chloroplast. The protein is Small ribosomal subunit protein bS18c (rps18) of Chlorella vulgaris (Green alga).